The sequence spans 429 residues: Histidine--tRNA ligase (429 aa).

The protein belongs to the class-II aminoacyl-tRNA synthetase family. Homodimer.

The protein localises to the cytoplasm. It carries out the reaction tRNA(His) + L-histidine + ATP = L-histidyl-tRNA(His) + AMP + diphosphate + H(+). The sequence is that of Histidine--tRNA ligase from Streptococcus pneumoniae (strain CGSP14).